Reading from the N-terminus, the 191-residue chain is UPF0312 protein Sbal195_3198 (191 aa).

The first 22 residues, 1–22, serve as a signal peptide directing secretion; the sequence is MKKQLFSALIGASLLAPMAASA.

Belongs to the UPF0312 family. Type 1 subfamily.

The protein localises to the periplasm. This chain is UPF0312 protein Sbal195_3198, found in Shewanella baltica (strain OS195).